Reading from the N-terminus, the 315-residue chain is Olfactory receptor 3A1 (315 aa).

Topologically, residues M1–P28 are extracellular. Residue N8 is glycosylated (N-linked (GlcNAc...) asparagine). The chain crosses the membrane as a helical span at residues V29–V52. At L53–T60 the chain is on the cytoplasmic side. Residues P61 to P82 traverse the membrane as a helical segment. Residues S83–Q103 lie on the Extracellular side of the membrane. An intrachain disulfide couples C100 to C192. Residues L104–Y123 traverse the membrane as a helical segment. The Cytoplasmic portion of the chain corresponds to D124–V143. The chain crosses the membrane as a helical span at residues Q144–T161. At H162–E199 the chain is on the extracellular side. Residues L200 to H223 form a helical membrane-spanning segment. At V224–A240 the chain is on the cytoplasmic side. A helical membrane pass occupies residues F241–R264. Residues L265 to K275 lie on the Extracellular side of the membrane. Residues A276–F295 form a helical membrane-spanning segment. Residues R296–A315 lie on the Cytoplasmic side of the membrane.

The protein belongs to the G-protein coupled receptor 1 family.

Its subcellular location is the cell membrane. In terms of biological role, odorant receptor. The sequence is that of Olfactory receptor 3A1 (OR3A1) from Gorilla gorilla gorilla (Western lowland gorilla).